The following is a 77-amino-acid chain: Cold shock protein YdfK (77 aa).

This sequence to E.coli YnaE.

In Escherichia coli (strain K12), this protein is Cold shock protein YdfK (ydfK).